A 246-amino-acid chain; its full sequence is ATP synthase subunit a, chloroplastic (246 aa).

The next 5 membrane-spanning stretches (helical) occupy residues 33 to 53 (VHGQ…GFGL), 99 to 119 (TIFL…WALI), 133 to 153 (INTT…AGIN), 201 to 221 (GVLV…LGLF), and 222 to 242 (TSAI…GESL).

It belongs to the ATPase A chain family. As to quaternary structure, F-type ATPases have 2 components, CF(1) - the catalytic core - and CF(0) - the membrane proton channel. CF(1) has five subunits: alpha(3), beta(3), gamma(1), delta(1), epsilon(1). CF(0) has four main subunits: a, b, b' and c.

It localises to the plastid. It is found in the chloroplast thylakoid membrane. Key component of the proton channel; it plays a direct role in the translocation of protons across the membrane. This chain is ATP synthase subunit a, chloroplastic, found in Oltmannsiellopsis viridis (Marine flagellate).